The following is a 443-amino-acid chain: Trigger factor (443 aa).

Positions 161–246 (GDKVVIDFQG…IKKIMEGKLP (86 aa)) constitute a PPIase FKBP-type domain.

Belongs to the FKBP-type PPIase family. Tig subfamily.

The protein localises to the cytoplasm. It catalyses the reaction [protein]-peptidylproline (omega=180) = [protein]-peptidylproline (omega=0). Functionally, involved in protein export. Acts as a chaperone by maintaining the newly synthesized protein in an open conformation. Functions as a peptidyl-prolyl cis-trans isomerase. This is Trigger factor from Legionella pneumophila (strain Lens).